Consider the following 886-residue polypeptide: DNA mismatch repair protein MutS (886 aa).

ATP is bound at residue 641 to 648; it reads GPNMAGKS.

Belongs to the DNA mismatch repair MutS family.

Functionally, this protein is involved in the repair of mismatches in DNA. It is possible that it carries out the mismatch recognition step. This protein has a weak ATPase activity. This Rickettsia rickettsii (strain Sheila Smith) protein is DNA mismatch repair protein MutS.